The sequence spans 600 residues: DNA mismatch repair protein MutL (600 aa).

Residues 327-405 (DGSRAATTGA…FSPQPAAAEP (79 aa)) are disordered. Polar residues predominate over residues 349–367 (PNSQRPQTAWSAETSSSRP).

This sequence belongs to the DNA mismatch repair MutL/HexB family.

In terms of biological role, this protein is involved in the repair of mismatches in DNA. It is required for dam-dependent methyl-directed DNA mismatch repair. May act as a 'molecular matchmaker', a protein that promotes the formation of a stable complex between two or more DNA-binding proteins in an ATP-dependent manner without itself being part of a final effector complex. The protein is DNA mismatch repair protein MutL of Rhizobium johnstonii (strain DSM 114642 / LMG 32736 / 3841) (Rhizobium leguminosarum bv. viciae).